The chain runs to 614 residues: Probable LRR receptor-like serine/threonine-protein kinase At5g45780 (614 aa).

Residues 1–26 (MEISLMKFLFLGIWVYYYSVLDSVSA) form the signal peptide. Residues 27–242 (MDSLLSPKGV…NSKHHSLVLS (216 aa)) lie on the Extracellular side of the membrane. 4 LRR repeats span residues 104–126 (HLHTLLLQNNQLTGPIPSELGQL), 128–151 (ELETLDLSGNRFSGEIPASLGFLT), 152–174 (HLNYLRLSRNLLSGQVPHLVAGL), and 176–197 (GLSFLDLSFNNLSGPTPNISAK). N-linked (GlcNAc...) asparagine glycosylation is found at asparagine 186, asparagine 193, and asparagine 224. Residues 243–263 (FAFGIVVAFIISLMFLFFWVL) form a helical membrane-spanning segment. The Cytoplasmic portion of the chain corresponds to 264 to 614 (WHRSRLSRSH…IEAIELSGPR (351 aa)). Threonine 297 bears the Phosphothreonine mark. Residues 300–576 (FSPKNILGQG…QVLKVLEGLV (277 aa)) enclose the Protein kinase domain. 306–314 (LGQGGFGMV) is a binding site for ATP. Threonine 323 is subject to Phosphothreonine. Lysine 328 is a binding site for ATP. Position 380 is a phosphoserine (serine 380). Residue aspartate 426 is the Proton acceptor of the active site. Residues threonine 459, threonine 460, and threonine 465 each carry the phosphothreonine modification. The residue at position 473 (tyrosine 473) is a Phosphotyrosine. Phosphoserine is present on serine 475. The residue at position 476 (threonine 476) is a Phosphothreonine. Serine 480 carries the phosphoserine modification. Threonine 555 carries the phosphothreonine modification.

The protein belongs to the protein kinase superfamily. Ser/Thr protein kinase family.

The protein localises to the membrane. The catalysed reaction is L-seryl-[protein] + ATP = O-phospho-L-seryl-[protein] + ADP + H(+). The enzyme catalyses L-threonyl-[protein] + ATP = O-phospho-L-threonyl-[protein] + ADP + H(+). The polypeptide is Probable LRR receptor-like serine/threonine-protein kinase At5g45780 (Arabidopsis thaliana (Mouse-ear cress)).